The chain runs to 462 residues: Phospho-2-dehydro-3-deoxyheptonate aldolase AroG (462 aa).

Cysteine 87 is a Mn(2+) binding site. Phosphoenolpyruvate contacts are provided by residues arginine 126, 283-284, lysine 306, and arginine 337; that span reads ER. Mn(2+) contacts are provided by histidine 369, glutamate 411, and aspartate 441.

In terms of assembly, homodimer. Interacts with Rv0948c. Mn(2+) is required as a cofactor. It depends on Co(2+) as a cofactor. The cofactor is Cd(2+).

It carries out the reaction D-erythrose 4-phosphate + phosphoenolpyruvate + H2O = 7-phospho-2-dehydro-3-deoxy-D-arabino-heptonate + phosphate. It functions in the pathway metabolic intermediate biosynthesis; chorismate biosynthesis; chorismate from D-erythrose 4-phosphate and phosphoenolpyruvate: step 1/7. Feedback inhibited by tryptophan, tyrosine, phenylalanine and chorismate. In terms of biological role, catalyzes an aldol-like condensation reaction between phosphoenolpyruvate (PEP) and D-erythrose 4-phosphate (E4P) to generate 3-deoxy-D-arabino-heptulosonate 7-phosphate (DAH7P) and inorganic phosphate. This Mycobacterium tuberculosis (strain ATCC 25618 / H37Rv) protein is Phospho-2-dehydro-3-deoxyheptonate aldolase AroG (aroG).